Reading from the N-terminus, the 268-residue chain is Nickel import ATP-binding protein NikE (268 aa).

The ABC transporter domain occupies 4–252 (LNVSDLSHHY…SSDAGRVLQN (249 aa)). 45–52 (GRSGCGKS) serves as a coordination point for ATP.

Belongs to the ABC transporter superfamily. Nickel importer (TC 3.A.1.5.3) family. As to quaternary structure, the complex is composed of two ATP-binding proteins (NikD and NikE), two transmembrane proteins (NikB and NikC) and a solute-binding protein (NikA).

It is found in the cell inner membrane. It carries out the reaction Ni(2+)(out) + ATP + H2O = Ni(2+)(in) + ADP + phosphate + H(+). Its function is as follows. Part of the ABC transporter complex NikABCDE involved in nickel import. Responsible for energy coupling to the transport system. This is Nickel import ATP-binding protein NikE from Escherichia coli O157:H7.